Consider the following 202-residue polypeptide: Kunitz-type protein bli-5 (202 aa).

The first 20 residues, 1 to 20, serve as a signal peptide directing secretion; sequence MVSIHNSFILLMLMISICFC. The BPTI/Kunitz inhibitor domain occupies 135 to 184; it reads CVHPIFDHPDDGYLSRWGFDGEQCIEFKWNPERPSSANNFKTRAHCEDYC. Cystine bridges form between cysteine 135/cysteine 184 and cysteine 158/cysteine 180.

Expressed in larval and adult hypodermis, hermaphrodite vulva and adult excretory cell and duct.

Appears to lack serine protease inhibitor activity in vitro when tested with bovine pancreatic alpha-chymotrypsin and elastase. Involved in cuticle biosynthesis. The polypeptide is Kunitz-type protein bli-5 (Caenorhabditis elegans).